Reading from the N-terminus, the 238-residue chain is MGRSFEVRKASMAKTAGAKIKVYSKYGKEIYMCAKNGGGDPDMNLSLKHLIAKAKKDQVPAHVIDKAIDKANGGGGEDYTPARYEGFGPGGTSVIVDCLTDNGNRTFQDVRQCFVKVGAKIGVEGSVSHMFDHQAVFQFKGEDDEIILETLMMEDVDVTDVELEDGVITVFAPHTEFFKTKTALNGAFPDLTIDVEEITFVPQTHTPVAGEDAEKFQKFLDLLDDCDDVQQVYHNGEL.

The protein belongs to the TACO1 family.

It localises to the cytoplasm. This chain is Probable transcriptional regulatory protein VIBHAR_07036, found in Vibrio campbellii (strain ATCC BAA-1116).